We begin with the raw amino-acid sequence, 431 residues long: MLLKIKRVPTVVSNYQKDETVEEGGCGRNCLSKCCINGARLPLYTCKNLDKSVGENTESPVTFLESLVIGEWEDRFQRGLFRYDVTACETKVIPGKYGFIAQLNEGRHLKKRPTEFRVDKVLQPFDGNKFNFTKVGQEELLFQFKASTNDDDSEIQFLASMPLDADNSPSVVAINVSPIEYGHVLLIPRVLDCLPQRIDHKSLLLALQMAAEADNPYFRLGYNSLGAFATINHLHFQAYYLAMQFPIEKASSLKITTTNNGVKISKLLNYPVRGLLVEGGNTIKDLADTVSDASVCLQNNNIPFNILISDSGKRIFLLPQCYAEKQALGEVSSTLLDTQVNPAVWEMSGHMVLKRKEDYEGASEEKAWRLLAEVSLSEERFREVNTMIFDAIGFSSHEEEEEEELEEQNSMNGGSFTIVHCPSVKEEAVSN.

The Tele-GMP-histidine intermediate role is filled by His-235. The span at 398–407 (EEEEEEELEE) shows a compositional bias: acidic residues. The segment at 398-417 (EEEEEEELEEQNSMNGGSFT) is disordered.

The protein belongs to the GDPGP1 family. In terms of assembly, interacts with TLP1. As to expression, expressed in leaves, stems, roots, flowers and siliques.

The protein resides in the cytoplasm. It is found in the nucleus. It catalyses the reaction GDP-beta-L-galactose + phosphate = beta-L-galactose 1-phosphate + GDP + H(+). Its pathway is cofactor biosynthesis; L-ascorbate biosynthesis via GDP-alpha-D-mannose pathway; L-ascorbate from GDP-alpha-D-mannose: step 2/5. Functionally, catalyzes a reaction of the Smirnoff-Wheeler pathway, the major route to ascorbate biosynthesis in plants. Acts as a phosphorylase rather than as a transferase. Uses preferentially GDP-L-galactose and GDP-D-glucose as substrates. Lower activity with GDP-L-fucose, very low activity with GDP-D-mannose, and no activity with UDP-D-glucose, UDP-D-galactose or ADP-D-glucose. Highly specific for inorganic phosphate as the guanylyl acceptor. This is GDP-L-galactose phosphorylase 2 (VTC5) from Arabidopsis thaliana (Mouse-ear cress).